A 406-amino-acid chain; its full sequence is MMWCKTVIVLLATVGFISAEVYLKENFDNENWEDTWIYSKHPGKEFGKFVLTPGTFYNDAEADKGIQTSQDARFYAASRKFDGFSNEDKPLVVQFSVKHEQNIDCGGGYVKLFDCSLDQTDMHGESPYEIMFGPDICGPGTKKVHVIFSYKGKNHLISKDIRCKDDVYTHFYTLIVRPDNTYEVLIDNEKVESGNLEDDWDFLAPKKIKDPTATKPEDWDDRATIPDPDDKKPEDWDKPEHIPDPDATKPEDWDDEMDGEWEPPMIDNPEFKGEWQPKQLDNPNYKGAWEHPEIANPEYVPDDKLYLRKEICTLGFDLWQVKSGTIFDNVLITDDVELAAKAAAEVKNTQAGEKKMKEAQDEVQRKKDEEEAKKASDKDDEDEDDDDEEKDDESKQDKDQSEHDEL.

An N-terminal signal peptide occupies residues 1 to 17; the sequence is MMWCKTVIVLLATVGFI. A disulfide bridge connects residues C105 and C137. Residues Y109, K111, Y128, and D135 each contribute to the an alpha-D-glucoside site. Tandem repeats lie at residues 191-202, 210-221, 227-238, 244-255, 259-269, 273-283, and 287-297. The tract at residues 191 to 255 is 4 X approximate repeats; the sequence is VESGNLEDDW…DATKPEDWDD (65 aa). Residues 207 to 251 show a composition bias toward basic and acidic residues; the sequence is KIKDPTATKPEDWDDRATIPDPDDKKPEDWDKPEHIPDPDATKPE. A disordered region spans residues 207 to 259; that stretch reads KIKDPTATKPEDWDDRATIPDPDDKKPEDWDKPEHIPDPDATKPEDWDDEMDG. Positions 259–297 are 3 X approximate repeats; sequence GEWEPPMIDNPEFKGEWQPKQLDNPNYKGAWEHPEIANP. An an alpha-D-glucoside-binding site is contributed by D317. The disordered stretch occupies residues 347–406; sequence KNTQAGEKKMKEAQDEVQRKKDEEEAKKASDKDDEDEDDDDEEKDDESKQDKDQSEHDEL. Residues 352-377 are compositionally biased toward basic and acidic residues; it reads GEKKMKEAQDEVQRKKDEEEAKKASD. The segment covering 378-391 has biased composition (acidic residues); that stretch reads KDDEDEDDDDEEKD. Positions 392–406 are enriched in basic and acidic residues; it reads DESKQDKDQSEHDEL.

This sequence belongs to the calreticulin family.

It localises to the endoplasmic reticulum lumen. In terms of biological role, molecular calcium-binding chaperone promoting folding, oligomeric assembly and quality control in the ER via the calreticulin/calnexin cycle. This lectin may interact transiently with almost all of the monoglucosylated glycoproteins that are synthesized in the ER. This Drosophila melanogaster (Fruit fly) protein is Calreticulin.